Reading from the N-terminus, the 170-residue chain is Large ribosomal subunit protein uL10 (170 aa).

The protein belongs to the universal ribosomal protein uL10 family. As to quaternary structure, part of the ribosomal stalk of the 50S ribosomal subunit. The N-terminus interacts with L11 and the large rRNA to form the base of the stalk. The C-terminus forms an elongated spine to which L12 dimers bind in a sequential fashion forming a multimeric L10(L12)X complex.

In terms of biological role, forms part of the ribosomal stalk, playing a central role in the interaction of the ribosome with GTP-bound translation factors. The protein is Large ribosomal subunit protein uL10 of Chlamydia felis (strain Fe/C-56) (Chlamydophila felis).